The chain runs to 663 residues: Innate immunity activator protein (663 aa).

A disordered region spans residues 1-68 (MLQMPKLNEI…RLPTQPGPGW (68 aa)). Residues 40–50 (RAQGQAGGARA) show a composition bias toward low complexity. Residues 118–147 (AVHKQQRALEARLEACLEELRRLCLREAEL) are a coiled coil. The Nuclear localization signal (NLS) 1 signature appears at 164-170 (PKVRRRI). Disordered stretches follow at residues 242–362 (RRRN…ASSL), 378–425 (VPGQ…PRRR), and 444–493 (PLPH…RHRG). Residues 259–272 (ELSASDDSSLSDGL) are compositionally biased toward low complexity. Residues 282-298 (PKPPPESPAPPSRPLPP) show a composition bias toward pro residues. The segment covering 327–340 (TSLDHPYEKPRKSS) has biased composition (basic and acidic residues). The Nuclear localization signal (NLS) 2 motif lies at 332–338 (PYEKPRK). The span at 350–361 (ATTPQDGPSASS) shows a compositional bias: polar residues. A Nuclear localization signal (NLS) 3 motif is present at residues 422-428 (PRRRPTH). The span at 455–475 (EDSGSDVSSISHPTSPGSSSP) shows a compositional bias: low complexity.

In terms of assembly, interacts with IRAK1, NOD2 and RIPK2; the interaction takes place upon PRR stimulation. Interacts with YWHAQ/14-3-3T; the interaction increases upon PRR stimulation and is required for cellular signaling pathway activation and cytokine secretion. Interacts (via N-terminal domain) with CYTH1 and CYTH2 (via their N-terminal domains). Interacts with FBXW11 and BTRC; associates with SCF E3 ubiquitin-protein ligase complexes. Highly expressed in intestinal myeloid-derived cells and expressed in monocyte-derived macrophages upon induction by PRR activation.

The protein resides in the nucleus. It is found in the cytoplasm. Its function is as follows. Expressed in peripheral macrophages and intestinal myeloid-derived cells, is required for optimal PRR (pattern recognition receptor)-induced signaling, cytokine secretion, and bacterial clearance. Upon stimulation of a broad range of PRRs (pattern recognition receptor) such as NOD2 or TLR2, TLR3, TLR4, TLR5, TLR7 and TLR9, associates with YWHAQ/14-3-3T, which in turn leads to the recruitment and activation of MAP kinases and NF-kappa-B signaling complexes that amplifies PRR-induced downstream signals and cytokine secretion. In the intestine, regulates adherens junction stability by regulating the degradation of CYTH1 and CYTH2, probably acting as substrate cofactor for SCF E3 ubiquitin-protein ligase complexes. Stabilizes adherens junctions by limiting CYTH1-dependent ARF6 activation. In Homo sapiens (Human), this protein is Innate immunity activator protein.